The chain runs to 535 residues: Thermosome subunit gamma (535 aa).

Belongs to the TCP-1 chaperonin family. Forms a Heterooligomeric complex of two stacked eight-membered rings.

In terms of biological role, molecular chaperone; binds unfolded polypeptides in vitro, and has a weak ATPase activity. This is Thermosome subunit gamma (thsC) from Saccharolobus solfataricus (strain ATCC 35092 / DSM 1617 / JCM 11322 / P2) (Sulfolobus solfataricus).